Consider the following 219-residue polypeptide: Aspartic protease inhibitor 10 (219 aa).

The first 23 residues, 1–23 (MMKCLFLLCLCLVPIVVFSSTFT), serve as a signal peptide directing secretion. A propeptide spanning residues 24 to 32 (SQNLIDLPS) is cleaved from the precursor. The Vacuolar targeting signal motif lies at 26 to 31 (NLIDLP). N-linked (GlcNAc...) asparagine glycosylation is present at asparagine 51. Disulfide bonds link cysteine 80-cysteine 125 and cysteine 173-cysteine 184.

Belongs to the protease inhibitor I3 (leguminous Kunitz-type inhibitor) family. In terms of tissue distribution, in tubers and green buds of untreated plants. After abscisic acid treatment or mechanical wounding is mostly accumulated in leaves, to a lesser extent in stems, but not in roots.

Inhibitor of cathepsin D (aspartic protease) and trypsin (serine protease). Protects the plant by inhibiting proteases of invading organisms. The chain is Aspartic protease inhibitor 10 (CDI) from Solanum tuberosum (Potato).